The following is a 34-amino-acid chain: Photosystem II reaction center protein Y (34 aa).

Topologically, residues 1-4 are lumenal; the sequence is MDIR. The helical transmembrane segment at 5 to 23 threads the bilayer; it reads LLIVLLPVLAAASWALYNI. Residues 24-34 are Stromal-facing; it reads GRVALQQFRSM.

This sequence belongs to the PsbY family. In terms of assembly, PSII is composed of 1 copy each of membrane proteins PsbA, PsbB, PsbC, PsbD, PsbE, PsbF, PsbH, PsbI, PsbJ, PsbK, PsbL, PsbM, PsbT, PsbX, PsbY, PsbZ, Psb30/Ycf12, at least 3 peripheral proteins of the oxygen-evolving complex and a large number of cofactors. It forms dimeric complexes.

The protein resides in the plastid. The protein localises to the chloroplast thylakoid membrane. Loosely associated component of the core of photosystem II (PSII), it is not always seen in crystals. PSII is a light-driven water plastoquinone oxidoreductase, using light energy to abstract electrons from H(2)O, generating a proton gradient subsequently used for ATP formation. The chain is Photosystem II reaction center protein Y from Gracilaria tenuistipitata var. liui (Red alga).